We begin with the raw amino-acid sequence, 768 residues long: Probable LRR receptor-like serine/threonine-protein kinase At4g37250 (768 aa).

The first 21 residues, 1 to 21 (MRMELISVIFFFFCSVLSSSA), serve as a signal peptide directing secretion. At 22 to 328 (LNSDGLVLMK…PNPRTGLRPG (307 aa)) the chain is on the extracellular side. N-linked (GlcNAc...) asparagine glycosylation is present at N64. LRR repeat units follow at residues 67–90 (KVLT…GSLL), 91–112 (TLQS…SFFN), 115–137 (ELRF…IGDL), 139–162 (NLLT…ASLR), 163–183 (NLTV…GGWR), 184–206 (VVEF…FGGY), 207–229 (SLQY…IGVN), and 232–254 (RNVT…PVFL). N99 is a glycosylation site (N-linked (GlcNAc...) asparagine). Residues N144, N163, N196, N212, N233, and N242 are each glycosylated (N-linked (GlcNAc...) asparagine). Residues 301-324 (PNTIGSNPVTDPNSQQTDPNPRTG) form a disordered region. Over residues 303-320 (TIGSNPVTDPNSQQTDPN) the composition is skewed to polar residues. A helical membrane pass occupies residues 329-349 (VIIGIVVGDIAGIGILAVIFL). Topologically, residues 350 to 768 (YIYRCKKNKI…IKSSSFHYGH (419 aa)) are cytoplasmic. Positions 361 to 432 (DNNNNDKQRT…NANQRSGDNK (72 aa)) are disordered. The span at 378-387 (STFSSSSSSP) shows a compositional bias: low complexity. A compositionally biased stretch (acidic residues) spans 407–420 (PSEEEDEDDEDEES). Positions 449–756 (KASAYILGAT…AVLERFHPNS (308 aa)) constitute a Protein kinase domain. A phosphoserine mark is found at S451 and S531. T553 bears the Phosphothreonine mark. Phosphoserine is present on S662.

This sequence belongs to the protein kinase superfamily. Ser/Thr protein kinase family.

It is found in the membrane. The catalysed reaction is L-seryl-[protein] + ATP = O-phospho-L-seryl-[protein] + ADP + H(+). The enzyme catalyses L-threonyl-[protein] + ATP = O-phospho-L-threonyl-[protein] + ADP + H(+). In Arabidopsis thaliana (Mouse-ear cress), this protein is Probable LRR receptor-like serine/threonine-protein kinase At4g37250.